Consider the following 378-residue polypeptide: F-box/kelch-repeat protein At4g29370 (378 aa).

Residues 23-69 form the F-box domain; the sequence is TSLFLQLPDEILVNCLARLSKSSYRSLSLVCKTFRSLLHSQPLYSAR. Kelch repeat units follow at residues 124 to 172, 173 to 218, 220 to 259, and 260 to 305; these read GSKI…VLDD, KIYV…VRKI, VVGGKIYVKTGAEFMDWIYDVKRGKWSAADEYMSLLWSNS, and WCVI…NDNR.

In Arabidopsis thaliana (Mouse-ear cress), this protein is F-box/kelch-repeat protein At4g29370.